We begin with the raw amino-acid sequence, 238 residues long: Small ribosomal subunit protein uS3 (238 aa).

Residues 39–107 form the KH type-2 domain; the sequence is MREFIHDYAK…ELHLNIVEIR (69 aa). A compositionally biased stretch (basic and acidic residues) spans 212-222; the sequence is PQAHDRRHSEA. Residues 212-238 form a disordered region; the sequence is PQAHDRRHSEAQEGAAPRPPRRDRERA.

The protein belongs to the universal ribosomal protein uS3 family. Part of the 30S ribosomal subunit. Forms a tight complex with proteins S10 and S14.

Binds the lower part of the 30S subunit head. Binds mRNA in the 70S ribosome, positioning it for translation. This is Small ribosomal subunit protein uS3 from Cereibacter sphaeroides (strain ATCC 17029 / ATH 2.4.9) (Rhodobacter sphaeroides).